Consider the following 355-residue polypeptide: UDP-3-O-acylglucosamine N-acyltransferase (355 aa).

His258 (proton acceptor) is an active-site residue.

The protein belongs to the transferase hexapeptide repeat family. LpxD subfamily. Homotrimer.

It carries out the reaction a UDP-3-O-[(3R)-3-hydroxyacyl]-alpha-D-glucosamine + a (3R)-hydroxyacyl-[ACP] = a UDP-2-N,3-O-bis[(3R)-3-hydroxyacyl]-alpha-D-glucosamine + holo-[ACP] + H(+). It participates in bacterial outer membrane biogenesis; LPS lipid A biosynthesis. Its function is as follows. Catalyzes the N-acylation of UDP-3-O-acylglucosamine using 3-hydroxyacyl-ACP as the acyl donor. Is involved in the biosynthesis of lipid A, a phosphorylated glycolipid that anchors the lipopolysaccharide to the outer membrane of the cell. The polypeptide is UDP-3-O-acylglucosamine N-acyltransferase (Rhizobium rhizogenes (strain K84 / ATCC BAA-868) (Agrobacterium radiobacter)).